A 105-amino-acid chain; its full sequence is Large ribosomal subunit protein uL24 (105 aa).

The tract at residues 40–61 (RIKKHTPQSANERGASSGGIVT) is disordered.

This sequence belongs to the universal ribosomal protein uL24 family. Part of the 50S ribosomal subunit.

Functionally, one of two assembly initiator proteins, it binds directly to the 5'-end of the 23S rRNA, where it nucleates assembly of the 50S subunit. In terms of biological role, one of the proteins that surrounds the polypeptide exit tunnel on the outside of the subunit. This is Large ribosomal subunit protein uL24 from Mycobacteroides abscessus (strain ATCC 19977 / DSM 44196 / CCUG 20993 / CIP 104536 / JCM 13569 / NCTC 13031 / TMC 1543 / L948) (Mycobacterium abscessus).